The primary structure comprises 174 residues: Shikimate kinase 2 (174 aa).

12 to 17 serves as a coordination point for ATP; it reads GAGKTT. Thr-16 and Asp-32 together coordinate Mg(2+). Substrate contacts are provided by Asp-34, Arg-58, and Gly-79. Residues 112–126 are LID domain; that stretch reads EEYPQDTQRPTLTGR. Arg-120 is a binding site for ATP. Residue Arg-139 participates in substrate binding.

This sequence belongs to the shikimate kinase family. AroL subfamily. In terms of assembly, monomer. Requires Mg(2+) as cofactor.

It is found in the cytoplasm. The catalysed reaction is shikimate + ATP = 3-phosphoshikimate + ADP + H(+). The protein operates within metabolic intermediate biosynthesis; chorismate biosynthesis; chorismate from D-erythrose 4-phosphate and phosphoenolpyruvate: step 5/7. Functionally, catalyzes the specific phosphorylation of the 3-hydroxyl group of shikimic acid using ATP as a cosubstrate. The protein is Shikimate kinase 2 of Serratia proteamaculans (strain 568).